The chain runs to 376 residues: Serpin B6 (376 aa).

At Met-1 the chain carries N-acetylmethionine. Residue Ser-151 is modified to Phosphoserine. Lys-195 is modified (N6-acetyllysine).

This sequence belongs to the serpin family. Ov-serpin subfamily. In terms of assembly, forms a complex with the monomeric form of beta-tryptase.

It is found in the cytoplasm. Functionally, inhibitor of cathepsin G, kallikrein-8 and thrombin. May play an important role in the inner ear in the protection against leakage of lysosomal content during stress. May be involved in the regulation of serine proteinases present in the brain or extravasated from the blood. This Macaca fascicularis (Crab-eating macaque) protein is Serpin B6 (SERPINB6).